We begin with the raw amino-acid sequence, 606 residues long: V-type proton ATPase catalytic subunit A (606 aa).

ATP is bound at residue 239-246 (GAFGCGKT).

Belongs to the ATPase alpha/beta chains family. In terms of assembly, V-ATPase is a heteromultimeric enzyme made up of two complexes: the ATP-hydrolytic V1 complex and the proton translocation V0 complex. The V1 complex consists of three catalytic AB heterodimers that form a heterohexamer, three peripheral stalks each consisting of EG heterodimers, one central rotor including subunits D and F, and the regulatory subunits C and H. The proton translocation complex V0 consists of the proton transport subunit a, a ring of proteolipid subunits c9c'', rotary subunit d, subunits e and f, and the accessory subunits vah-19/Ac45 and vah-20/PRR.

It catalyses the reaction ATP + H2O + 4 H(+)(in) = ADP + phosphate + 5 H(+)(out). Functionally, catalytic subunit of the V1 complex of vacuolar(H+)-ATPase (V-ATPase), a multisubunit enzyme composed of a peripheral complex (V1) that hydrolyzes ATP and a membrane integral complex (V0) that translocates protons. V-ATPase is responsible for acidifying and maintaining the pH of intracellular compartments and in some cell types, is targeted to the plasma membrane, where it is responsible for acidifying the extracellular environment. Required along with other vacuolar ATPase components for the removal of protein aggregates which form in immature oocytes in the distal gonad. This removal occurs as the oocytes mature and move to the proximal gonad, is triggered by the introduction of sperm through mating and occurs before fertilization. The introduction of sperm triggers V-ATPase accumulation in proximal oocytes and induces lysosomal acidification which leads to engulfing of protein aggregates by lysosomes and subsequent clearance of the aggregates. Lysosomal acidification also leads to changes in mitochondrial morphology and function. Mitochondria in distal immature oocytes are fragmented, produce high levels of reactive oxygen species (ROS) and have high membrane potential, indicative of metabolic inactivity. In contrast, mitochondria in proximal mature oocytes are tubular with lower ROS levels and membrane potential, indicative of an active metabolic state required for aggregate mobilization before clearance. Involved in receptor-mediated endocytosis. The polypeptide is V-type proton ATPase catalytic subunit A (Caenorhabditis briggsae).